Here is a 353-residue protein sequence, read N- to C-terminus: Methylthioribose-1-phosphate isomerase (353 aa).

Substrate-binding positions include 51 to 53 (RGA), R94, and Q199. Residue D240 is the Proton donor of the active site. Position 250 to 251 (250 to 251 (NK)) interacts with substrate.

Belongs to the EIF-2B alpha/beta/delta subunits family. MtnA subfamily. Homodimer.

The enzyme catalyses 5-(methylsulfanyl)-alpha-D-ribose 1-phosphate = 5-(methylsulfanyl)-D-ribulose 1-phosphate. The protein operates within amino-acid biosynthesis; L-methionine biosynthesis via salvage pathway; L-methionine from S-methyl-5-thio-alpha-D-ribose 1-phosphate: step 1/6. Its function is as follows. Catalyzes the interconversion of methylthioribose-1-phosphate (MTR-1-P) into methylthioribulose-1-phosphate (MTRu-1-P). The sequence is that of Methylthioribose-1-phosphate isomerase from Bacillus cereus (strain ATCC 14579 / DSM 31 / CCUG 7414 / JCM 2152 / NBRC 15305 / NCIMB 9373 / NCTC 2599 / NRRL B-3711).